A 139-amino-acid polypeptide reads, in one-letter code: Nucleoside diphosphate kinase (139 aa).

ATP-binding residues include Lys10, Phe58, Arg86, Thr92, Arg103, and Asn113. His116 (pros-phosphohistidine intermediate) is an active-site residue.

This sequence belongs to the NDK family. In terms of assembly, homotetramer. Mg(2+) serves as cofactor.

The protein resides in the cytoplasm. It carries out the reaction a 2'-deoxyribonucleoside 5'-diphosphate + ATP = a 2'-deoxyribonucleoside 5'-triphosphate + ADP. The catalysed reaction is a ribonucleoside 5'-diphosphate + ATP = a ribonucleoside 5'-triphosphate + ADP. Functionally, major role in the synthesis of nucleoside triphosphates other than ATP. The ATP gamma phosphate is transferred to the NDP beta phosphate via a ping-pong mechanism, using a phosphorylated active-site intermediate. In Desulfovibrio desulfuricans (strain ATCC 27774 / DSM 6949 / MB), this protein is Nucleoside diphosphate kinase.